The following is a 243-amino-acid chain: 1-(5-phosphoribosyl)-5-[(5-phosphoribosylamino)methylideneamino] imidazole-4-carboxamide isomerase (243 aa).

Asp8 serves as the catalytic Proton acceptor. Asp130 serves as the catalytic Proton donor.

The protein belongs to the HisA/HisF family.

Its subcellular location is the cytoplasm. The enzyme catalyses 1-(5-phospho-beta-D-ribosyl)-5-[(5-phospho-beta-D-ribosylamino)methylideneamino]imidazole-4-carboxamide = 5-[(5-phospho-1-deoxy-D-ribulos-1-ylimino)methylamino]-1-(5-phospho-beta-D-ribosyl)imidazole-4-carboxamide. It functions in the pathway amino-acid biosynthesis; L-histidine biosynthesis; L-histidine from 5-phospho-alpha-D-ribose 1-diphosphate: step 4/9. This Ruthia magnifica subsp. Calyptogena magnifica protein is 1-(5-phosphoribosyl)-5-[(5-phosphoribosylamino)methylideneamino] imidazole-4-carboxamide isomerase.